The following is a 77-amino-acid chain: Acyl carrier protein (77 aa).

Residues 2–77 (ADVLERVTKI…DAVTYIESHL (76 aa)) enclose the Carrier domain. Position 37 is an O-(pantetheine 4'-phosphoryl)serine (Ser37).

It belongs to the acyl carrier protein (ACP) family. Post-translationally, 4'-phosphopantetheine is transferred from CoA to a specific serine of apo-ACP by AcpS. This modification is essential for activity because fatty acids are bound in thioester linkage to the sulfhydryl of the prosthetic group.

Its subcellular location is the cytoplasm. The protein operates within lipid metabolism; fatty acid biosynthesis. Carrier of the growing fatty acid chain in fatty acid biosynthesis. The protein is Acyl carrier protein of Bacillus anthracis (strain A0248).